We begin with the raw amino-acid sequence, 248 residues long: Ubiquinone/menaquinone biosynthesis C-methyltransferase UbiE (248 aa).

S-adenosyl-L-methionine-binding residues include serine 68 and aspartate 92.

The protein belongs to the class I-like SAM-binding methyltransferase superfamily. MenG/UbiE family.

The catalysed reaction is a 2-demethylmenaquinol + S-adenosyl-L-methionine = a menaquinol + S-adenosyl-L-homocysteine + H(+). It carries out the reaction a 2-methoxy-6-(all-trans-polyprenyl)benzene-1,4-diol + S-adenosyl-L-methionine = a 5-methoxy-2-methyl-3-(all-trans-polyprenyl)benzene-1,4-diol + S-adenosyl-L-homocysteine + H(+). It participates in quinol/quinone metabolism; menaquinone biosynthesis; menaquinol from 1,4-dihydroxy-2-naphthoate: step 2/2. It functions in the pathway cofactor biosynthesis; ubiquinone biosynthesis. Its function is as follows. Methyltransferase required for the conversion of demethylmenaquinol (DMKH2) to menaquinol (MKH2) and the conversion of 2-polyprenyl-6-methoxy-1,4-benzoquinol (DDMQH2) to 2-polyprenyl-3-methyl-6-methoxy-1,4-benzoquinol (DMQH2). This is Ubiquinone/menaquinone biosynthesis C-methyltransferase UbiE from Rickettsia conorii (strain ATCC VR-613 / Malish 7).